The following is a 377-amino-acid chain: Alanine racemase (377 aa).

K37 serves as the catalytic Proton acceptor; specific for D-alanine. K37 is modified (N6-(pyridoxal phosphate)lysine). R135 is a substrate binding site. Residue Y271 is the Proton acceptor; specific for L-alanine of the active site. M319 contributes to the substrate binding site.

It belongs to the alanine racemase family. Pyridoxal 5'-phosphate is required as a cofactor.

It carries out the reaction L-alanine = D-alanine. Its pathway is amino-acid biosynthesis; D-alanine biosynthesis; D-alanine from L-alanine: step 1/1. In terms of biological role, catalyzes the interconversion of L-alanine and D-alanine. May also act on other amino acids. This is Alanine racemase (alr) from Helicobacter pylori (strain HPAG1).